The following is a 505-amino-acid chain: 2,3-bisphosphoglycerate-independent phosphoglycerate mutase (505 aa).

Residues D13 and S63 each coordinate Mn(2+). The active-site Phosphoserine intermediate is S63. Residues H124, R153–D154, R183, R189, R254–R257, and K330 each bind substrate. Residues D396, H400, D437, H438, and H456 each coordinate Mn(2+).

The protein belongs to the BPG-independent phosphoglycerate mutase family. As to quaternary structure, monomer. It depends on Mn(2+) as a cofactor.

The enzyme catalyses (2R)-2-phosphoglycerate = (2R)-3-phosphoglycerate. Its pathway is carbohydrate degradation; glycolysis; pyruvate from D-glyceraldehyde 3-phosphate: step 3/5. In terms of biological role, catalyzes the interconversion of 2-phosphoglycerate and 3-phosphoglycerate. The polypeptide is 2,3-bisphosphoglycerate-independent phosphoglycerate mutase (Roseobacter denitrificans (strain ATCC 33942 / OCh 114) (Erythrobacter sp. (strain OCh 114))).